The sequence spans 90 residues: Large ribosomal subunit protein eL37 (90 aa).

The A20-type zinc finger occupies 13-46 (NKSHTLCNRCGRRSFHVQKKTCSSCGYPAAKMRS). Zn(2+) is bound by residues C19, C22, C34, and C37.

The protein belongs to the eukaryotic ribosomal protein eL37 family. Component of the large ribosomal subunit. Mature ribosomes consist of a small (40S) and a large (60S) subunit. The 40S subunit contains about 32 different proteins and 1 molecule of RNA (18S). The 60S subunit contains 45 different proteins and 3 molecules of RNA (25S, 5.8S and 5S). Zn(2+) serves as cofactor.

The protein localises to the cytoplasm. Its function is as follows. Component of the ribosome, a large ribonucleoprotein complex responsible for the synthesis of proteins in the cell. The small ribosomal subunit (SSU) binds messenger RNAs (mRNAs) and translates the encoded message by selecting cognate aminoacyl-transfer RNA (tRNA) molecules. The large subunit (LSU) contains the ribosomal catalytic site termed the peptidyl transferase center (PTC), which catalyzes the formation of peptide bonds, thereby polymerizing the amino acids delivered by tRNAs into a polypeptide chain. The nascent polypeptides leave the ribosome through a tunnel in the LSU and interact with protein factors that function in enzymatic processing, targeting, and the membrane insertion of nascent chains at the exit of the ribosomal tunnel. The protein is Large ribosomal subunit protein eL37 of Candida albicans (strain SC5314 / ATCC MYA-2876) (Yeast).